We begin with the raw amino-acid sequence, 233 residues long: Orotate phosphoribosyltransferase (233 aa).

Residue Lys-29 participates in 5-phospho-alpha-D-ribose 1-diphosphate binding. 37 to 38 (FF) serves as a coordination point for orotate. 5-phospho-alpha-D-ribose 1-diphosphate contacts are provided by residues 79–80 (YK), Arg-109, Lys-110, Lys-113, His-115, and 135–143 (DDVITAGTA). Orotate is bound by residues Thr-139 and Arg-167.

This sequence belongs to the purine/pyrimidine phosphoribosyltransferase family. PyrE subfamily. In terms of assembly, homodimer.

It carries out the reaction orotidine 5'-phosphate + diphosphate = orotate + 5-phospho-alpha-D-ribose 1-diphosphate. Its pathway is pyrimidine metabolism; UMP biosynthesis via de novo pathway; UMP from orotate: step 1/2. In terms of biological role, catalyzes the transfer of a ribosyl phosphate group from 5-phosphoribose 1-diphosphate to orotate, leading to the formation of orotidine monophosphate (OMP). The protein is Orotate phosphoribosyltransferase (ura-5) of Neurospora crassa (strain ATCC 24698 / 74-OR23-1A / CBS 708.71 / DSM 1257 / FGSC 987).